Here is a 328-residue protein sequence, read N- to C-terminus: tRNA(Ile)-lysidine synthase (328 aa).

Position 35–40 (35–40 (SGGADS)) interacts with ATP.

The protein belongs to the tRNA(Ile)-lysidine synthase family.

It localises to the cytoplasm. It carries out the reaction cytidine(34) in tRNA(Ile2) + L-lysine + ATP = lysidine(34) in tRNA(Ile2) + AMP + diphosphate + H(+). Its function is as follows. Ligates lysine onto the cytidine present at position 34 of the AUA codon-specific tRNA(Ile) that contains the anticodon CAU, in an ATP-dependent manner. Cytidine is converted to lysidine, thus changing the amino acid specificity of the tRNA from methionine to isoleucine. The polypeptide is tRNA(Ile)-lysidine synthase (Polaromonas naphthalenivorans (strain CJ2)).